Reading from the N-terminus, the 249-residue chain is DnaJ homolog subfamily C member 5 homolog (249 aa).

Ser12 carries the post-translational modification Phosphoserine. At Thr13 the chain carries Phosphothreonine. A phosphoserine mark is found at Ser14 and Ser17. The region spanning 15-84 (GDSLYEILGL…RNIYDNYGSL (70 aa)) is the J domain. Tyr19 is modified (phosphotyrosine). A compositionally biased stretch (basic and acidic residues) spans 146 to 162 (HDQYSHLNRPDGNREGN). 2 disordered regions span residues 146–177 (HDQYSHLNRPDGNREGNDMPTHLGQPPRLEDV) and 218–249 (PFTGAPVAANENTSLNTTEQTTYTPDMVNQKY). A compositionally biased stretch (polar residues) spans 227-241 (NENTSLNTTEQTTYT).

Post-translationally, fatty acylated. Heavily palmitoylated in the cysteine string motif. As to expression, expressed in wide range of synaptic terminals: embryonic nervous system, larval neuromuscular junctions, adult visual system (neuropil of optic ganglia and terminal of R1-8 photoreceptors) and thoracic neuromuscular junctions. Also expressed in non-neuronal cells: follicle cells, spermatheca, testis and ejaculatory bulb. Low level of expression is found in many neuronal and non-neuronal tissues.

The protein localises to the membrane. Functionally, may have an important role in presynaptic function. The protein is DnaJ homolog subfamily C member 5 homolog of Drosophila melanogaster (Fruit fly).